A 590-amino-acid chain; its full sequence is uncharacterized protein (590 aa).

Over 1 to 68 (MKFSKPKFSM…SQRVWGPWNY (68 aa)) the chain is Cytoplasmic. The helical transmembrane segment at 69 to 89 (VAFWLADSVNVNTWMIAGTAV) threads the bilayer. At 90–94 (ESGLS) the chain is on the extracellular side. Residues 95-115 (WWEAWITVWVGYTIAAFILTI) form a helical membrane-spanning segment. The Cytoplasmic portion of the chain corresponds to 116 to 124 (AGRAGAVYH). The chain crosses the membrane as a helical span at residues 125 to 145 (ISFPVLSRSSFGIWGSLWPIL). The Extracellular portion of the chain corresponds to 146–149 (NRAV). Residues 150-170 (MACVWYGVQAWIGGECVTLMI) traverse the membrane as a helical segment. Residues 171-194 (RSIWPSFSHIPNTMAKSGTETYQW) are Cytoplasmic-facing. Residues 195-215 (VGFFIFWLISNVAIWFPVYQI) traverse the membrane as a helical segment. Residues 216–218 (RHL) are Extracellular-facing. A helical membrane pass occupies residues 219–239 (FTAKSFLAPPAAIAFLIWALV). The Cytoplasmic segment spans residues 240-258 (KAHGAGDAIHAKTQLSTWN). A helical membrane pass occupies residues 259–279 (HGWAVTAGIISCLDNFATLIV). Over 280–298 (NNPDFTRFATTPNAPIFPQ) the chain is Extracellular. Residues 299–319 (LITIPMGFGITTLIGVLVGSA) form a helical membrane-spanning segment. At 320 to 390 (SKSIYGENIW…LCPMFINIRR (71 aa)) the chain is on the cytoplasmic side. A helical transmembrane segment spans residues 391–411 (GGYIASIIGICMCPWNLLSSS). Over 412–418 (NSFANSL) the chain is Extracellular. A helical membrane pass occupies residues 419 to 439 (SAYAVFLSSFAGILIADYFVI). The Cytoplasmic segment spans residues 440–467 (RKGYLKVDALYTINPNEPYWFTYGINLR). The chain crosses the membrane as a helical span at residues 468–488 (AFASYICGLLINVVGLAGAVG). The Extracellular portion of the chain corresponds to 489-500 (DKVPKAALTMNN). The helical transmembrane segment at 501–521 (IAYLLGIVTSFLSHLIICKIF) threads the bilayer. Over 522-590 (PVTACGEKFL…GIDIKESSVF (69 aa)) the chain is Cytoplasmic. The segment at 566 to 590 (VSYDSKEKSDDGKSGGIDIKESSVF) is disordered.

This sequence belongs to the purine-cytosine permease (2.A.39) family.

It localises to the cytoplasm. Its subcellular location is the nucleus. The protein localises to the membrane. This is an uncharacterized protein from Schizosaccharomyces pombe (strain 972 / ATCC 24843) (Fission yeast).